The following is a 100-amino-acid chain: Large ribosomal subunit protein bL28 (100 aa).

Belongs to the bacterial ribosomal protein bL28 family.

The polypeptide is Large ribosomal subunit protein bL28 (Ehrlichia chaffeensis (strain ATCC CRL-10679 / Arkansas)).